Here is a 168-residue protein sequence, read N- to C-terminus: Photosystem I assembly protein Ycf3 (168 aa).

TPR repeat units follow at residues 35-68, 72-105, and 120-153; these read AFTY…EIDP, SYIL…NPFL, and GEQA…TPGN.

It belongs to the Ycf3 family.

It localises to the plastid. It is found in the chloroplast thylakoid membrane. Functionally, essential for the assembly of the photosystem I (PSI) complex. May act as a chaperone-like factor to guide the assembly of the PSI subunits. The sequence is that of Photosystem I assembly protein Ycf3 from Calycanthus floridus var. glaucus (Eastern sweetshrub).